The chain runs to 494 residues: Guanosine-5'-triphosphate,3'-diphosphate pyrophosphatase (494 aa).

Belongs to the GppA/Ppx family. GppA subfamily.

The enzyme catalyses guanosine 3'-diphosphate 5'-triphosphate + H2O = guanosine 3',5'-bis(diphosphate) + phosphate + H(+). It functions in the pathway purine metabolism; ppGpp biosynthesis; ppGpp from GTP: step 2/2. Catalyzes the conversion of pppGpp to ppGpp. Guanosine pentaphosphate (pppGpp) is a cytoplasmic signaling molecule which together with ppGpp controls the 'stringent response', an adaptive process that allows bacteria to respond to amino acid starvation, resulting in the coordinated regulation of numerous cellular activities. This chain is Guanosine-5'-triphosphate,3'-diphosphate pyrophosphatase, found in Escherichia coli O6:H1 (strain CFT073 / ATCC 700928 / UPEC).